A 1663-amino-acid polypeptide reads, in one-letter code: MATDGASCEPDLSRAPEDAAGAAAEAAKKEFDVDTLSKSELRMLLSVMEGELEARDLVIEALRARRREVFIQERYGRFNLNDPFLALQRDYEAGAGDKEKKPVCTNPLSILEAVMAHCKKMQERMSAQLAAAESRQKKLEMEKLQLQALEQEHKKLAARLEEERGKNKQVVLMLVKECKQLSGKVIEEAQKLEDIMAKLEEEKKKTNELEEELSTEKRRSTEMEAQMEKQLSEFDTEREQLRAKLNREEAHTTDLKEEIDKMKKMIEQLKRGSDSKPSLSLPRKTKDRCLVSISVGTEGTVTRSVACQTDLVTESADHMKKLPLTMPVKPSTGSPLVSANAKGSVCTSATMARPGIDRQPSHGDLIGASVPAFPPPSANRIEENGPSTGSTPDPTSSTPPLPSNAAPPTTQTPGIAPQNSQAPPIHSLHSPCANASLHPGLNPRIQAARFRFQGNANDPDQNGNTTQSPPSRDVSPTSRDNLVAKQLARNTVTQALSRFTSPQAGAPSRPGAPPTGDVGTHPPVGRTSLKTHGVARVDRGNPPPIPPKKPGLSQTPSPPHPQLKVIIDSSRASNTAAKVDNKTVASPPSSLPQGNRVINEENLPKSSSPQLPPKPSIDLTVAPAGCAVSALATSQVGAWPAATPGLNQPACSDSSLVIPTTIAFCSSINPVSASSCRPGASDSLLVTASGWSPSLTPLLMSGGPAPLAGRPTLLQQAAAQGNVTLLSMLLNEEGLDINYSCEDGHSALYSAAKNGHTDCVRLLLSAEAQVNAADKNGFTPLCAAAAQGHFECVELLIAYDANINHAADGGQTPLYLACKNGNKECIKLLLEAGTNRSVKTTDGWTPVHAAVDTGNVDSLKLLMYHRILARGNSFNEEGSESSVFDLDGGEESPEGISKPVVPADLINHANREGWTAAHIAASKGFKNCLEILCRHGGLEPERRDKCNRTVHDVATDDCKHLLENLNALKIPLRISVGEIEPSNYGSDDLECENTICALNIRKQTSWDDFSKAVSQALINHFQAISSDGWWSLEDVTCNNTTDSNIGLSARSIRSITLGNVPWSVGQSFTQSPWDFMRKNKAEHITVLLSGPQEGCLSSVTYASMIPLQMMQNYLRLVEQYHNVIFHGPEGSLQDYIVHQLALCLKHRQMTAGFSCEIVRAEVDAGFSKEQLLDLFISSACLIPVKQSPSKKKIIIILENLEKSSLSELLRDFLAPLENRSTESPCTFQKGNGMSECYYFHENCFLMGTIAKACLQGSDLLVQQHFRWVQLRWDGEPMQGLLQRFLRRKVVNKFKGQAPSPCDPVCKIVDWALSVWRQLNSCLARLGTPEALLGPKYFLSCPVVPGHAQVTVKWMSKLWNGVIAPRVQEAILSRASVKRQPGFGQTTAKRHPSQGQQAVVKAALSILLNKAVLHGCPLPRAELDQHTADFRGGSFPLSIVSSYNSCNKKKGESGAWRKVNTSPRRKSGRFSLPTWNKPDLSTEGMKNKTISQLNCNRNASLSKQKSLENDLSLTLNLDQRLSLGSDDEADLVKELQSMCSSKSESDISKIADSRDDIRMFDSSGNNRVLSATINNLRMPVSQKEVSPLSSHQTTECSNSKSKTELGVSRVKSFLPVPRSKVTQCSQNTKRSSSSSNTRQIEINNNSKEENWNLHKNEHLEKPNK.

5 disordered regions span residues 1–23, 203–222, 352–440, 454–478, and 498–616; these read MATD…AGAA, KKKT…RSTE, ARPG…LHPG, GNAN…SPTS, and RFTS…PKPS. The stretch at 119–276 forms a coiled coil; that stretch reads KKMQERMSAQ…EQLKRGSDSK (158 aa). Low complexity predominate over residues 384 to 396; sequence NGPSTGSTPDPTS. A compositionally biased stretch (polar residues) spans 411-422; that stretch reads QTPGIAPQNSQA. R498 carries the post-translational modification Asymmetric dimethylarginine. The span at 583–593 shows a compositional bias: polar residues; it reads TVASPPSSLPQ. 5 ANK repeats span residues 709 to 739, 743 to 772, 776 to 805, 809 to 838, and 842 to 871; these read GRPT…DINY, DGHS…QVNA, NGFT…NINH, GGQT…NRSV, and DGWT…LARG. The tract at residues 876–897 is disordered; sequence EEGSESSVFDLDGGEESPEGIS. The ANK 6 repeat unit spans residues 912 to 942; sequence EGWTAAHIAASKGFKNCLEILCRHGGLEPER. Positions 1446–1485 are disordered; it reads NKKKGESGAWRKVNTSPRRKSGRFSLPTWNKPDLSTEGMK. The residue at position 1524 (S1524) is a Phosphoserine. 2 disordered regions span residues 1580 to 1602 and 1615 to 1663; these read SQKE…KSKT and VPRS…KPNK. The span at 1582–1599 shows a compositional bias: polar residues; sequence KEVSPLSSHQTTECSNSK. The span at 1624-1638 shows a compositional bias: low complexity; it reads SQNTKRSSSSSNTRQ. The span at 1645-1663 shows a compositional bias: basic and acidic residues; that stretch reads SKEENWNLHKNEHLEKPNK.

In terms of assembly, interacts with CTTN/cortactin SH3 domain. Interacts with STRN, STRN4/zinedin and MOB4/phocein; this interactions mediate the association with the STRIPAK core complex and may regulate dendritic spine distribution of the STRIPAK complex in hippocampal neurons. Activation of glutamate receptors weakens the interaction with STRN and STRN4.

The protein resides in the cytoplasm. It localises to the cell cortex. It is found in the cell projection. The protein localises to the dendritic spine. Functionally, regulates the dendritic spine distribution of CTTN/cortactin in hippocampal neurons, and thus controls dendritic spinogenesis and dendritic spine maintenance. Associates with the striatin-interacting phosphatase and kinase (STRIPAK) core complex to regulate dendritic spine distribution of the STRIPAK complex in hippocampal neurons. In Nomascus leucogenys (Northern white-cheeked gibbon), this protein is Cortactin-binding protein 2 (CTTNBP2).